The primary structure comprises 96 residues: ATP-dependent Clp protease adapter protein ClpS (96 aa).

It belongs to the ClpS family. As to quaternary structure, binds to the N-terminal domain of the chaperone ClpA.

In terms of biological role, involved in the modulation of the specificity of the ClpAP-mediated ATP-dependent protein degradation. The protein is ATP-dependent Clp protease adapter protein ClpS of Campylobacter jejuni subsp. jejuni serotype O:6 (strain 81116 / NCTC 11828).